We begin with the raw amino-acid sequence, 20 residues long: Citrate synthase (20 aa).

It belongs to the citrate synthase family. As to quaternary structure, homodimer.

It carries out the reaction oxaloacetate + acetyl-CoA + H2O = citrate + CoA + H(+). It participates in carbohydrate metabolism; tricarboxylic acid cycle; isocitrate from oxaloacetate: step 1/2. In Populus euphratica (Euphrates poplar), this protein is Citrate synthase.